The primary structure comprises 120 residues: MFLLYEYDIFWAFLIISSVIPILAFRISGLLAPTSIGPEKLSSYESGIEPMGDAWLQFRIRYYMFALVFVVFDVETIFLYPWALSFDILGVSVFIEALIFVLILVLGLVYAWRKGALEWS.

The next 3 helical transmembrane spans lie at 2 to 22, 64 to 84, and 88 to 108; these read FLLY…VIPI, MFAL…PWAL, and ILGV…VLGL.

The protein belongs to the complex I subunit 3 family. NDH is composed of at least 16 different subunits, 5 of which are encoded in the nucleus.

The protein resides in the plastid. It localises to the chloroplast thylakoid membrane. It catalyses the reaction a plastoquinone + NADH + (n+1) H(+)(in) = a plastoquinol + NAD(+) + n H(+)(out). The catalysed reaction is a plastoquinone + NADPH + (n+1) H(+)(in) = a plastoquinol + NADP(+) + n H(+)(out). In terms of biological role, NDH shuttles electrons from NAD(P)H:plastoquinone, via FMN and iron-sulfur (Fe-S) centers, to quinones in the photosynthetic chain and possibly in a chloroplast respiratory chain. The immediate electron acceptor for the enzyme in this species is believed to be plastoquinone. Couples the redox reaction to proton translocation, and thus conserves the redox energy in a proton gradient. The chain is NAD(P)H-quinone oxidoreductase subunit 3, chloroplastic from Oenothera biennis (German evening primrose).